A 172-amino-acid chain; its full sequence is 3-hydroxydecanoyl-[acyl-carrier-protein] dehydratase (172 aa).

His71 is a catalytic residue.

The protein belongs to the thioester dehydratase family. FabA subfamily. As to quaternary structure, homodimer.

It localises to the cytoplasm. The catalysed reaction is a (3R)-hydroxyacyl-[ACP] = a (2E)-enoyl-[ACP] + H2O. It catalyses the reaction (3R)-hydroxydecanoyl-[ACP] = (2E)-decenoyl-[ACP] + H2O. The enzyme catalyses (2E)-decenoyl-[ACP] = (3Z)-decenoyl-[ACP]. It participates in lipid metabolism; fatty acid biosynthesis. Necessary for the introduction of cis unsaturation into fatty acids. Catalyzes the dehydration of (3R)-3-hydroxydecanoyl-ACP to E-(2)-decenoyl-ACP and then its isomerization to Z-(3)-decenoyl-ACP. Can catalyze the dehydratase reaction for beta-hydroxyacyl-ACPs with saturated chain lengths up to 16:0, being most active on intermediate chain length. This Vibrio vulnificus (strain CMCP6) protein is 3-hydroxydecanoyl-[acyl-carrier-protein] dehydratase.